Reading from the N-terminus, the 245-residue chain is Polynucleotide 3'-phosphatase (245 aa).

It belongs to the DNA 3' phosphatase family.

It is found in the nucleus. The enzyme catalyses a 3'end (2'-deoxyribonucleotide 3'-phosphate)-DNA + H2O = a 3'-end 2'-deoxyribonucleotide-DNA + phosphate. In terms of biological role, dephosphorylate DNA's 3'-phosphate termini. Has a role in the repair of breaks in single-stranded DNA. The protein is Polynucleotide 3'-phosphatase (TPP1) of Saccharomyces mikatae (Yeast).